A 562-amino-acid polypeptide reads, in one-letter code: Arginine--tRNA ligase 1 (562 aa).

The short motif at 122–132 (PNIAKPFSMGH) is the 'HIGH' region element.

It belongs to the class-I aminoacyl-tRNA synthetase family. In terms of assembly, monomer.

It localises to the cytoplasm. The enzyme catalyses tRNA(Arg) + L-arginine + ATP = L-arginyl-tRNA(Arg) + AMP + diphosphate. This chain is Arginine--tRNA ligase 1, found in Bacillus cereus (strain ZK / E33L).